A 529-amino-acid polypeptide reads, in one-letter code: Cytochrome P450 monooxygenase atmQ (529 aa).

Helical transmembrane passes span 22–42 (YPFAAPTWVYLVGAILIQQLA) and 51–71 (SWVNVPVVGGHGIIGSWIAAF). Residue C467 participates in heme binding.

Belongs to the cytochrome P450 family. Requires heme as cofactor.

Its subcellular location is the membrane. It functions in the pathway secondary metabolite biosynthesis. Cytochrome P450 monooxygenase; part of the ATM2 gene cluster that mediates the biosynthesis of aflatrem, a tremorgenic mycotoxin with acute neurotoxic effects. Synthesis of geranylgeranyl diphosphate (GGPP) by AtmG (a GGPP synthase) precedes condensation of GGPP with indole 3-glycerol phosphate, followed by epoxidation and cyclization by AtmM (a FAD-dependent monooxygenase) and AtmC (a prenyltransferase) to produce paspaline. AtmB is also essential for paspaline production, but its exact role has not been identified yet. AtmP, a cytochrome P450 monooxygenase, subsequently converts paspaline to 13-desoxypaxilline via PC-M6 by removal of the C-30 methyl group and oxidation at C-10. AtmQ, a cytochrome P450 monooxygenase, then catalyzes the oxidation of 13-desoxypaxilline, first at C-7 to produce paspalicine and then at C-13 to form paspalinine. Finally, AtmD prenylates paspalinine to form aflatrem. This Aspergillus flavus protein is Cytochrome P450 monooxygenase atmQ.